Consider the following 176-residue polypeptide: Inner membrane-spanning protein YciB (176 aa).

Transmembrane regions (helical) follow at residues 24–44, 49–69, 76–96, 119–139, and 149–169; these read TATA…AFRH, PMLW…LVLH, WKPT…QLAF, LSVV…FVAY, and FKLF…SLWL.

Belongs to the YciB family.

Its subcellular location is the cell inner membrane. Functionally, plays a role in cell envelope biogenesis, maintenance of cell envelope integrity and membrane homeostasis. This is Inner membrane-spanning protein YciB from Paraburkholderia phytofirmans (strain DSM 17436 / LMG 22146 / PsJN) (Burkholderia phytofirmans).